A 1164-amino-acid polypeptide reads, in one-letter code: Phospholipid-transporting ATPase IA (1164 aa).

Over 1–65 (MPTMRRTVSE…TAKYNIITFL (65 aa)) the chain is Cytoplasmic. The residue at position 25 (S25) is a Phosphoserine. Phosphothreonine is present on T28. The residue at position 29 (S29) is a Phosphoserine. The helical transmembrane segment at 66 to 86 (PRFLYSQFRRAANSFFLFIAL) threads the bilayer. Residues 87–92 (LQQIPD) lie on the Exoplasmic loop side of the membrane. The chain crosses the membrane as a helical span at residues 93-115 (VSPTGRYTTLVPLLFILAVAAIK). Residues 116–297 (EIIEDIKRHK…SNVERITNVQ (182 aa)) lie on the Cytoplasmic side of the membrane. The chain crosses the membrane as a helical span at residues 298–319 (ILILFCILIAMSLVCSVGSAIW). Residues 320–344 (NRRHSGKDWYLNLNYGGASNFGLNF) are Exoplasmic loop-facing. Residues 345-366 (LTFIILFNNLIPISLLVTLEVV) traverse the membrane as a helical segment. The Cytoplasmic segment spans residues 367–857 (KFTQAYFINW…GAWNYNRVSK (491 aa)). D409 functions as the 4-aspartylphosphate intermediate in the catalytic mechanism. ATP contacts are provided by D409, K410, and T411. D409 is a Mg(2+) binding site. T411 is a binding site for Mg(2+). Residue S443 is modified to Phosphoserine. ATP contacts are provided by residues E508, F549, K572, R605, T685, G686, D687, 741–748 (ALIIDGKT), R775, and K781. D801 lines the Mg(2+) pocket. ATP contacts are provided by N804 and D805. Residue D805 participates in Mg(2+) binding. Residues 858 to 878 (CILYCFYKNIVLYIIEIWFAF) traverse the membrane as a helical segment. Topologically, residues 879–890 (VNGFSGQILFER) are exoplasmic loop. A helical membrane pass occupies residues 891-910 (WCIGLYNVMFTAMPPLTLGI). The Cytoplasmic segment spans residues 911–940 (FERSCRKENMLKYPELYKTSQNALDFNTKV). The chain crosses the membrane as a helical span at residues 941 to 962 (FWVHCLNGLFHSVILFWFPLKA). Topologically, residues 963-976 (LQYGTAFGNGKTSD) are exoplasmic loop. A helical transmembrane segment spans residues 977 to 999 (YLLLGNFVYTFVVITVCLKAGLE). The Cytoplasmic portion of the chain corresponds to 1000–1005 (TSYWTW). A helical membrane pass occupies residues 1006 to 1026 (FSHIAIWGSIALWVVFFGIYS). At 1027-1044 (SLWPAIPMAPDMSGEAAM) the chain is on the exoplasmic loop side. A helical membrane pass occupies residues 1045 to 1070 (LFSSGVFWMGLLFIPVASLLLDVVYK). At 1071-1164 (VIKRTAFKTL…DTTKQRPDEW (94 aa)) the chain is on the cytoplasmic side. 1095-1102 (GAVVLGKS) contacts ATP. At S1126 the chain carries Phosphoserine.

Belongs to the cation transport ATPase (P-type) (TC 3.A.3) family. Type IV subfamily. Component of a P4-ATPase flippase complex which consists of a catalytic alpha subunit and an accessory beta subunit. Interacts with TMEM30A to form a flippase complex; this complex forms an intermediate phosphoenzyme. Interacts with TMEM30B; this interaction is reported conflictingly. Requires Mg(2+) as cofactor. Post-translationally, cleaved by calpain in a caspase- and calcium influx-dependent manner during platelet apoptosis leading to a 100 kDa polypeptide. In terms of tissue distribution, found in most adult tissues except liver, testis and placenta. Most abundant in heart, brain and skeletal muscle. Also detected in fetal tissues. Isoform 1 is only detected in brain, skeletal muscle and heart and is the most abundant form in skeletal muscle. Highly expressed in platelets.

It is found in the cytoplasmic vesicle. It localises to the secretory vesicle. The protein resides in the chromaffin granule membrane. Its subcellular location is the cytoplasmic granule. The protein localises to the cell membrane. It is found in the endoplasmic reticulum. It localises to the golgi apparatus. The enzyme catalyses ATP + H2O + phospholipidSide 1 = ADP + phosphate + phospholipidSide 2.. It carries out the reaction a 1,2-diacyl-sn-glycero-3-phospho-L-serine(out) + ATP + H2O = a 1,2-diacyl-sn-glycero-3-phospho-L-serine(in) + ADP + phosphate + H(+). With respect to regulation, ATPase activity is stimulated by phosphatidylserine (PS) and minimally by phosphatidylethanolamine (PE). ATPase activity is inhibited by beryllium fluoride and aluminum trifluoride. Catalytic component of a P4-ATPase flippase complex which catalyzes the hydrolysis of ATP coupled to the transport of aminophospholipids from the outer to the inner leaflet of various membranes and ensures the maintenance of asymmetric distribution of phospholipids. Phospholipid translocation also seems to be implicated in vesicle formation and in uptake of lipid signaling molecules. In vitro, its ATPase activity is selectively and stereospecifically stimulated by phosphatidylserine (PS). The flippase complex ATP8A1:TMEM30A seems to play a role in regulation of cell migration probably involving flippase-mediated translocation of phosphatidylethanolamine (PE) at the cell membrane. Acts as aminophospholipid translocase at the cell membrane in neuronal cells. In Homo sapiens (Human), this protein is Phospholipid-transporting ATPase IA.